We begin with the raw amino-acid sequence, 853 residues long: Penicillin-binding protein 1A (853 aa).

The Cytoplasmic segment spans residues 1 to 6 (MRIAKL). Residues 7–27 (ILNTLLTLCILGLVAGGMLYF) form a helical; Signal-anchor for type II membrane protein membrane-spanning segment. Over 28–853 (HLKSELQQPM…TPATQPQELF (826 aa)) the chain is Periplasmic. Residues 37 to 205 (MQIYTADGKL…STMNPLYSLK (169 aa)) are transglycosylase. Glu-75 functions as the Proton donor; for transglycosylase activity in the catalytic mechanism. A transpeptidase region spans residues 387-681 (QRANGEWQLG…RVISGELAFL (295 aa)). The active-site Acyl-ester intermediate; for transpeptidase activity is Ser-441. Residues 615-636 (NALKPTDDSTNGEELDQQPETV) are disordered.

In the N-terminal section; belongs to the glycosyltransferase 51 family. The protein in the C-terminal section; belongs to the transpeptidase family.

The protein localises to the cell inner membrane. The catalysed reaction is [GlcNAc-(1-&gt;4)-Mur2Ac(oyl-L-Ala-gamma-D-Glu-L-Lys-D-Ala-D-Ala)](n)-di-trans,octa-cis-undecaprenyl diphosphate + beta-D-GlcNAc-(1-&gt;4)-Mur2Ac(oyl-L-Ala-gamma-D-Glu-L-Lys-D-Ala-D-Ala)-di-trans,octa-cis-undecaprenyl diphosphate = [GlcNAc-(1-&gt;4)-Mur2Ac(oyl-L-Ala-gamma-D-Glu-L-Lys-D-Ala-D-Ala)](n+1)-di-trans,octa-cis-undecaprenyl diphosphate + di-trans,octa-cis-undecaprenyl diphosphate + H(+). The enzyme catalyses Preferential cleavage: (Ac)2-L-Lys-D-Ala-|-D-Ala. Also transpeptidation of peptidyl-alanyl moieties that are N-acyl substituents of D-alanine.. Its pathway is cell wall biogenesis; peptidoglycan biosynthesis. Its function is as follows. Cell wall formation. Synthesis of cross-linked peptidoglycan from the lipid intermediates. The enzyme has a penicillin-insensitive transglycosylase N-terminal domain (formation of linear glycan strands) and a penicillin-sensitive transpeptidase C-terminal domain (cross-linking of the peptide subunits). This chain is Penicillin-binding protein 1A (mrcA), found in Haemophilus influenzae (strain ATCC 51907 / DSM 11121 / KW20 / Rd).